Reading from the N-terminus, the 177-residue chain is Antigen TpF1 (177 aa).

It belongs to the Dps family. As to quaternary structure, homodecamer; either linked or stabilized by disulfide bonds.

Its function is as follows. May play an important structural role in the outer membrane. This is Antigen TpF1 (tpf1) from Treponema pallidum (strain Nichols).